The primary structure comprises 809 residues: Poly(A) polymerase (809 aa).

Residues M1 to P50 form a disordered region. Residues I12–T25 are compositionally biased toward low complexity. The segment covering Q26–P50 has biased composition (polar residues). Residues F133 to S135, D146 to D148, D200, K262, Y271, and G280 to V281 each bind ATP. D146, D148, and D200 together coordinate Mg(2+). Disordered regions lie at residues F529–Q760 and I785–N809. Positions V530 to K540 are enriched in basic and acidic residues. The segment covering S572–S655 has biased composition (low complexity). The segment covering V656–E665 has biased composition (polar residues). A compositionally biased stretch (low complexity) spans N666–L706. Residues E707–P735 are compositionally biased toward polar residues. Composition is skewed to low complexity over residues S736–Q760 and I785–S794.

It belongs to the poly(A) polymerase family. Mg(2+) serves as cofactor. Mn(2+) is required as a cofactor.

It is found in the nucleus. It catalyses the reaction RNA(n) + ATP = RNA(n)-3'-adenine ribonucleotide + diphosphate. Polymerase that creates the 3'-poly(A) tail of mRNA's. May acquire specificity through interaction with a cleavage and polyadenylation factor. This chain is Poly(A) polymerase (papA), found in Dictyostelium discoideum (Social amoeba).